A 29-amino-acid chain; its full sequence is Chassatide C1 (29 aa).

A cross-link (cyclopeptide (Gly-Asn)) is located at residues 1-29 (GDACGETCFTGICFTAGCSCNPWPTCTRN). Cystine bridges form between Cys-4-Cys-18, Cys-8-Cys-20, and Cys-13-Cys-26.

This is a cyclic peptide. Expressed in leaf, fruit, pedical and stem but not in root (at protein level).

Probably participates in a plant defense mechanism. The protein is Chassatide C1 of Chassalia chartacea (Chassalia curviflora).